The primary structure comprises 751 residues: Probable alpha-galactosidase C (751 aa).

Positions 1–27 are cleaved as a signal peptide; it reads MFGSPKRAALAAASLLAIFGNGPSVMA. N-linked (GlcNAc...) asparagine glycosylation is found at Asn49, Asn57, Asn162, Asn186, Asn194, Asn366, Asn433, Asn452, and Asn500. Asp510 serves as the catalytic Nucleophile. Asp572 functions as the Proton donor in the catalytic mechanism. N-linked (GlcNAc...) asparagine glycosylation is present at Asn720.

Belongs to the glycosyl hydrolase 36 family. As to quaternary structure, homotetramer. The cofactor is Mg(2+). NAD(+) serves as cofactor.

Its subcellular location is the secreted. It carries out the reaction Hydrolysis of terminal, non-reducing alpha-D-galactose residues in alpha-D-galactosides, including galactose oligosaccharides, galactomannans and galactolipids.. In terms of biological role, hydrolyzes a variety of simple alpha-D-galactoside as well as more complex molecules such as oligosaccharides and polysaccharides. In Aspergillus flavus (strain ATCC 200026 / FGSC A1120 / IAM 13836 / NRRL 3357 / JCM 12722 / SRRC 167), this protein is Probable alpha-galactosidase C (aglC).